The chain runs to 376 residues: Chaperone protein DnaJ (376 aa).

Residues 5 to 70 form the J domain; it reads DYYEVLGVGR…DKKAAYDQFG (66 aa). The CR-type zinc finger occupies 132–210; that stretch reads GLTKELRIPT…CHGEGRVEKS (79 aa). Cys145, Cys148, Cys162, Cys165, Cys184, Cys187, Cys198, and Cys201 together coordinate Zn(2+). CXXCXGXG motif repeat units follow at residues 145-152, 162-169, 184-191, and 198-205; these read CDSCDGSG, CGTCHGQG, CPTCHGRG, and CNKCHGEG.

This sequence belongs to the DnaJ family. In terms of assembly, homodimer. Requires Zn(2+) as cofactor.

The protein resides in the cytoplasm. In terms of biological role, participates actively in the response to hyperosmotic and heat shock by preventing the aggregation of stress-denatured proteins and by disaggregating proteins, also in an autonomous, DnaK-independent fashion. Unfolded proteins bind initially to DnaJ; upon interaction with the DnaJ-bound protein, DnaK hydrolyzes its bound ATP, resulting in the formation of a stable complex. GrpE releases ADP from DnaK; ATP binding to DnaK triggers the release of the substrate protein, thus completing the reaction cycle. Several rounds of ATP-dependent interactions between DnaJ, DnaK and GrpE are required for fully efficient folding. Also involved, together with DnaK and GrpE, in the DNA replication of plasmids through activation of initiation proteins. The chain is Chaperone protein DnaJ from Shewanella pealeana (strain ATCC 700345 / ANG-SQ1).